The sequence spans 206 residues: Lipid A acyltransferase PagP (206 aa).

The signal sequence occupies residues 1-22 (MKQMVCWLTAGLLTLGGLPARA). Residues 26–46 (VPAVPETPAAPAAPAVQETPA) show a composition bias toward low complexity. The interval 26–50 (VPAVPETPAAPAAPAVQETPASSAA) is disordered. Catalysis depends on residues His-80, Asp-123, and Ser-124.

The protein belongs to the lipid A palmitoyltransferase family. As to quaternary structure, homodimer.

It is found in the cell outer membrane. The catalysed reaction is a lipid A + a 1,2-diacyl-sn-glycero-3-phosphocholine = a hepta-acyl lipid A + a 2-acyl-sn-glycero-3-phosphocholine. The enzyme catalyses a lipid IVA + a 1,2-diacyl-sn-glycero-3-phosphocholine = a lipid IVB + a 2-acyl-sn-glycero-3-phosphocholine. It carries out the reaction a lipid IIA + a 1,2-diacyl-sn-glycero-3-phosphocholine = a lipid IIB + a 2-acyl-sn-glycero-3-phosphocholine. Functionally, transfers a fatty acid residue from the sn-1 position of a phospholipid to the N-linked hydroxyfatty acid chain on the proximal unit of lipid A or its precursors. The chain is Lipid A acyltransferase PagP from Laribacter hongkongensis (strain HLHK9).